We begin with the raw amino-acid sequence, 158 residues long: Ribosome maturation factor RimP (158 aa).

It belongs to the RimP family.

Its subcellular location is the cytoplasm. Its function is as follows. Required for maturation of 30S ribosomal subunits. The sequence is that of Ribosome maturation factor RimP from Pseudomonas fluorescens (strain SBW25).